Reading from the N-terminus, the 239-residue chain is Lysophospholipase-like protein 1 (239 aa).

An N-acetylalanine modification is found at alanine 2. Active-site charge relay system residues include serine 125, aspartate 180, and histidine 212.

The protein belongs to the AB hydrolase superfamily. AB hydrolase 2 family.

It localises to the cytoplasm. Its subcellular location is the cytosol. The enzyme catalyses S-hexadecanoyl-L-cysteinyl-[protein] + H2O = L-cysteinyl-[protein] + hexadecanoate + H(+). In terms of biological role, palmitoyl thioesterase that catalyzes depalmitoylation of CGAS and KCNMA1. Acts as a regulator of innate immunity by mediating depalmitoylation of CGAS, thereby preventing CGAS homodimerization and cyclic GMP-AMP synthase activity. Does not exhibit phospholipase nor triacylglycerol lipase activity, able to hydrolyze only short chain substrates due to its shallow active site. The protein is Lysophospholipase-like protein 1 of Mus musculus (Mouse).